A 353-amino-acid chain; its full sequence is 26S proteasome non-ATPase regulatory subunit 8 (353 aa).

The disordered stretch occupies residues 1–25 (MFIKGRAAKTPRGEPRRSSRGGRKL). The PCI domain maps to 165–334 (PSFERYMAQL…QQKPEDSTIP (170 aa)). Lys-300 is covalently cross-linked (Glycyl lysine isopeptide (Lys-Gly) (interchain with G-Cter in SUMO2)).

The protein belongs to the proteasome subunit S14 family. In terms of assembly, component of the 19S proteasome regulatory particle complex. The 26S proteasome consists of a 20S core particle (CP) and two 19S regulatory subunits (RP). The regulatory particle is made of a lid composed of 9 subunits including PSMD8, a base containing 6 ATPases and few additional components. Interacts with DDI2. Interacts with TASOR. As to expression, expressed in the Sertoli cells of the testis.

Component of the 26S proteasome, a multiprotein complex involved in the ATP-dependent degradation of ubiquitinated proteins. This complex plays a key role in the maintenance of protein homeostasis by removing misfolded or damaged proteins, which could impair cellular functions, and by removing proteins whose functions are no longer required. Therefore, the proteasome participates in numerous cellular processes, including cell cycle progression, apoptosis, or DNA damage repair. The sequence is that of 26S proteasome non-ATPase regulatory subunit 8 (Psmd8) from Mus musculus (Mouse).